The primary structure comprises 417 residues: Gamma-glutamyl phosphate reductase (417 aa).

Belongs to the gamma-glutamyl phosphate reductase family.

It is found in the cytoplasm. It carries out the reaction L-glutamate 5-semialdehyde + phosphate + NADP(+) = L-glutamyl 5-phosphate + NADPH + H(+). The protein operates within amino-acid biosynthesis; L-proline biosynthesis; L-glutamate 5-semialdehyde from L-glutamate: step 2/2. In terms of biological role, catalyzes the NADPH-dependent reduction of L-glutamate 5-phosphate into L-glutamate 5-semialdehyde and phosphate. The product spontaneously undergoes cyclization to form 1-pyrroline-5-carboxylate. This Polynucleobacter asymbioticus (strain DSM 18221 / CIP 109841 / QLW-P1DMWA-1) (Polynucleobacter necessarius subsp. asymbioticus) protein is Gamma-glutamyl phosphate reductase.